Consider the following 129-residue polypeptide: Histone H2A-IV (129 aa).

Belongs to the histone H2A family. In terms of assembly, the nucleosome is a histone octamer containing two molecules each of H2A, H2B, H3 and H4 assembled in one H3-H4 heterotetramer and two H2A-H2B heterodimers. The octamer wraps approximately 147 bp of DNA.

It localises to the nucleus. The protein localises to the chromosome. Core component of nucleosome. Nucleosomes wrap and compact DNA into chromatin, limiting DNA accessibility to the cellular machineries which require DNA as a template. Histones thereby play a central role in transcription regulation, DNA repair, DNA replication and chromosomal stability. DNA accessibility is regulated via a complex set of post-translational modifications of histones, also called histone code, and nucleosome remodeling. The polypeptide is Histone H2A-IV (Volvox carteri (Green alga)).